A 325-amino-acid polypeptide reads, in one-letter code: UDP-N-acetylglucosamine transporter ROCK1 (325 aa).

Residues 1–13 (MATANGAKSPSSM) lie on the Cytoplasmic side of the membrane. A helical transmembrane segment spans residues 14–34 (GPKVLFYSILLTLQYGAQPLI). Over 35–42 (SKRCIRKD) the chain is Lumenal. The chain crosses the membrane as a helical span at residues 43 to 63 (VIVTSSVLTCEIVKVICALIL). At 64 to 109 (MARNGSLKGLAKEWTLMGSLTASGLPAAIYALQNSLLQISYRSLDS) the chain is on the cytoplasmic side. Residues 110 to 130 (LTFSILNQTKIFFTAFFTFII) form a helical membrane-spanning segment. The Lumenal portion of the chain corresponds to 131–135 (LRQKQ). The chain crosses the membrane as a helical span at residues 136 to 156 (SILQIGALCLLIMAAVLLSVG). Residues 157-171 (EGSNKDSSGINADQK) are Cytoplasmic-facing. Residues 172–192 (LFYGIIPVLAASVLSGLASSL) traverse the membrane as a helical segment. The Lumenal portion of the chain corresponds to 193 to 203 (CQWASQVKKHS). Residues 204-224 (SYLMTVEMSIVGSLCLLVSTL) form a helical membrane-spanning segment. Over 225–241 (KSPDGEAIKKYGFFHGW) the chain is Cytoplasmic. Residues 242 to 262 (TALTLVPVISNALGGILVGLV) form a helical membrane-spanning segment. Residues 263–270 (TSHAGGVR) are Lumenal-facing. Residues 271–291 (KGFVIVSALLVTALLQFAFEG) traverse the membrane as a helical segment. Residues 292–325 (KPPSSYCLVALPLVMSSISMYQKYPYIDKKKKKV) are Cytoplasmic-facing.

This sequence belongs to the nucleotide-sugar transporter family. CMP-Sialate:CMP antiporter (TC 2.A.7.12) subfamily. In terms of tissue distribution, expressed in roots, cotyledons, leaves, stems, flowers and siliques.

It is found in the endoplasmic reticulum membrane. Its function is as follows. Mediates the transport of UDP-linked acetylated hexosamines across the endoplasmic reticulum (ER) membrane. Facilitates UDP-N-acetylglucosamine (UDP-GlcNAc) and UDP-N-acetylgalactosamine (UDP-GalNAc) transport. Regulates the cytokinin signal in meristematic cells through modulating activity of cytokinin oxidases/dehydrogenases. Part of the ER quality control system, which determines the fate of aberrant proteins in the secretory pathway. In Arabidopsis thaliana (Mouse-ear cress), this protein is UDP-N-acetylglucosamine transporter ROCK1.